A 406-amino-acid polypeptide reads, in one-letter code: Multifunctional CCA protein (406 aa).

ATP-binding residues include G8 and R11. Residues G8 and R11 each coordinate CTP. 2 residues coordinate Mg(2+): D21 and D23. Residues R91, R138, and R141 each contribute to the ATP site. CTP is bound by residues R91, R138, and R141. The HD domain maps to 229–331; that stretch reads TGIHQEMVSD…LELLGRCDAL (103 aa).

The protein belongs to the tRNA nucleotidyltransferase/poly(A) polymerase family. Bacterial CCA-adding enzyme type 1 subfamily. As to quaternary structure, monomer. Can also form homodimers and oligomers. It depends on Mg(2+) as a cofactor. The cofactor is Ni(2+).

It carries out the reaction a tRNA precursor + 2 CTP + ATP = a tRNA with a 3' CCA end + 3 diphosphate. The catalysed reaction is a tRNA with a 3' CCA end + 2 CTP + ATP = a tRNA with a 3' CCACCA end + 3 diphosphate. Catalyzes the addition and repair of the essential 3'-terminal CCA sequence in tRNAs without using a nucleic acid template. Adds these three nucleotides in the order of C, C, and A to the tRNA nucleotide-73, using CTP and ATP as substrates and producing inorganic pyrophosphate. tRNA 3'-terminal CCA addition is required both for tRNA processing and repair. Also involved in tRNA surveillance by mediating tandem CCA addition to generate a CCACCA at the 3' terminus of unstable tRNAs. While stable tRNAs receive only 3'-terminal CCA, unstable tRNAs are marked with CCACCA and rapidly degraded. The chain is Multifunctional CCA protein from Stenotrophomonas maltophilia (strain R551-3).